Reading from the N-terminus, the 660-residue chain is Polycomb protein SCMH1 (660 aa).

2 MBT repeats span residues 28–126 and 134–235; these read FTWD…LQPP and SSWP…LQPP. Residues 233–345 are disordered; it reads QPPGTKVVIP…EPDTSTVPQD (113 aa). Basic residues-rich tracts occupy residues 273-284 and 305-320; these read RGRKPGKKRGRT and FPKK…RKPR. Positions 330–343 are enriched in low complexity; it reads PTTSTPEPDTSTVP. An SAM domain is found at 593-658; that stretch reads WTVEDVMQFV…SYHIDRLKQG (66 aa).

This sequence belongs to the SCM family. In terms of assembly, interacts with the SAM domain of PHC1 via its SAM domain in vitro. Associates with a PRC1-like complex. In terms of tissue distribution, strongly expressed in heart, muscle and pancreas. Weakly expressed in brain, placenta, lung, liver and kidney.

Its subcellular location is the nucleus. Associates with Polycomb group (PcG) multiprotein complexes; the complex class is required to maintain the transcriptionally repressive state of some genes. In Homo sapiens (Human), this protein is Polycomb protein SCMH1.